Here is a 274-residue protein sequence, read N- to C-terminus: Protein FAM210A (274 aa).

A compositionally biased stretch (polar residues) spans 51-66 (KWLHSQPKQQDSSTKT). Positions 51–91 (KWLHSQPKQQDSSTKTPVHDLPSGSQHQSEESSPSAKSSIS) are disordered. Over residues 81-91 (ESSPSAKSSIS) the composition is skewed to low complexity. The 113-residue stretch at 105–217 (DQSIGLLKRF…GYLSTPPLVK (113 aa)) folds into the DUF1279 domain. Residues 124–144 (VLIPVHLVTSSFWFGSFYYAA) form a helical membrane-spanning segment. Positions 221–274 (QDRMEETKELFTEKMEETRDIISGKMEETKDRISEKLQETKDRVAFRKKKNEEM) form a coiled coil.

The protein belongs to the FAM210 family.

The protein localises to the membrane. The protein resides in the mitochondrion. It localises to the cytoplasm. In terms of biological role, may play a role in the structure and strength of both muscle and bone. The protein is Protein FAM210A (fam210a) of Xenopus tropicalis (Western clawed frog).